The following is a 276-amino-acid chain: Proteasome subunit beta type-8 (276 aa).

Residues 1-33 (MALLDVCGAPRGQRPESALPVAGSGRRSDPGHY) form a disordered region. Residues 1–72 (MALLDVCGAP…RNVQIEMAHG (72 aa)) constitute a propeptide, removed in mature form. At aspartate 5 the chain carries Phosphothreonine. The Nucleophile role is filled by threonine 73.

Belongs to the peptidase T1B family. The 26S proteasome consists of a 20S proteasome core and two 19S regulatory subunits. The 20S proteasome core is composed of 28 subunits that are arranged in four stacked rings, resulting in a barrel-shaped structure. The two end rings are each formed by seven alpha subunits, and the two central rings are each formed by seven beta subunits. The catalytic chamber with the active sites is on the inside of the barrel. Component of the immunoproteasome, where it displaces the equivalent housekeeping subunit PSMB5. Component of the spermatoproteasome, a form of the proteasome specifically found in testis. Directly interacts with POMP. Interacts with TAP1. As to quaternary structure, (Microbial infection) Interacts with HIV-1 TAT protein. Post-translationally, autocleaved. The resulting N-terminal Thr residue of the mature subunit is responsible for the nucleophile proteolytic activity.

It is found in the cytoplasm. It localises to the nucleus. The enzyme catalyses Cleavage of peptide bonds with very broad specificity.. The proteasome is a multicatalytic proteinase complex which is characterized by its ability to cleave peptides with Arg, Phe, Tyr, Leu, and Glu adjacent to the leaving group at neutral or slightly basic pH. The proteasome has an ATP-dependent proteolytic activity. This subunit is involved in antigen processing to generate class I binding peptides. Replacement of PSMB5 by PSMB8 increases the capacity of the immunoproteasome to cleave model peptides after hydrophobic and basic residues. Involved in the generation of spliced peptides resulting from the ligation of two separate proteasomal cleavage products that are not contiguous in the parental protein. Acts as a major component of interferon gamma-induced sensitivity. Plays a key role in apoptosis via the degradation of the apoptotic inhibitor MCL1. May be involved in the inflammatory response pathway. In cancer cells, substitution of isoform 1 (E2) by isoform 2 (E1) results in immunoproteasome deficiency. Required for the differentiation of preadipocytes into adipocytes. The sequence is that of Proteasome subunit beta type-8 (PSMB8) from Homo sapiens (Human).